The primary structure comprises 562 residues: Matrix metalloproteinase-25 (562 aa).

Positions 1–21 (MRLRLRLLALLLLLLAPPARA) are cleaved as a signal peptide. Residues 22-107 (PKPSAQDVSL…VAGLVRRRRR (86 aa)) constitute a propeptide that is removed on maturation. The Cysteine switch signature appears at 88–95 (PRCSLPDV). Zn(2+)-binding residues include C90 and H233. E234 is a catalytic residue. Positions 237 and 243 each coordinate Zn(2+). The interval 278 to 313 (LYGKAPQTPYDKPTRKPLAPPPQPPASPTHSPSFPI) is disordered. Positions 295-304 (LAPPPQPPAS) are enriched in pro residues. Hemopexin repeat units follow at residues 314-363 (PDRC…WEGL), 367-412 (VRVV…GLPP), 413-461 (GEEV…EGAP), and 462-508 (PSPD…WLDC). C317 and C508 are disulfide-bonded. A disordered region spans residues 490-526 (SIKTEPDAPQPMGPNWLDCPAPSSGPRAPRPPKATPV). The GPI-anchor amidated alanine moiety is linked to residue A539. A propeptide spans 540–562 (AGRWPAPIPLLLLPLLVGGVASR) (removed in mature form).

Belongs to the peptidase M10A family. Zn(2+) serves as cofactor. It depends on Ca(2+) as a cofactor. The precursor is cleaved by a furin endopeptidase. Expressed predominantly in leukocytes, lung and spleen. Expressed also in colon carcinoma, astrocytoma and glioblastomas.

The protein resides in the cell membrane. Its subcellular location is the secreted. It is found in the extracellular space. The protein localises to the extracellular matrix. Its function is as follows. May activate progelatinase A. This Homo sapiens (Human) protein is Matrix metalloproteinase-25 (MMP25).